The chain runs to 429 residues: 3-phosphoshikimate 1-carboxyvinyltransferase (429 aa).

3-phosphoshikimate-binding residues include K25, S26, and R30. K25 contacts phosphoenolpyruvate. Phosphoenolpyruvate is bound by residues G99 and R127. 7 residues coordinate 3-phosphoshikimate: S173, S174, Q175, S201, D317, N340, and K344. Q175 contacts phosphoenolpyruvate. The active-site Proton acceptor is D317. R348, R390, and K415 together coordinate phosphoenolpyruvate.

This sequence belongs to the EPSP synthase family. Monomer.

It is found in the cytoplasm. It catalyses the reaction 3-phosphoshikimate + phosphoenolpyruvate = 5-O-(1-carboxyvinyl)-3-phosphoshikimate + phosphate. Its pathway is metabolic intermediate biosynthesis; chorismate biosynthesis; chorismate from D-erythrose 4-phosphate and phosphoenolpyruvate: step 6/7. Its function is as follows. Catalyzes the transfer of the enolpyruvyl moiety of phosphoenolpyruvate (PEP) to the 5-hydroxyl of shikimate-3-phosphate (S3P) to produce enolpyruvyl shikimate-3-phosphate and inorganic phosphate. The chain is 3-phosphoshikimate 1-carboxyvinyltransferase from Pseudoalteromonas atlantica (strain T6c / ATCC BAA-1087).